A 460-amino-acid polypeptide reads, in one-letter code: tRNA (guanine(37)-N(1))-methyltransferase (460 aa).

Residues histidine 204, 243-244 (DL), 271-272 (DA), and asparagine 292 contribute to the S-adenosyl-L-methionine site. The span at 390–428 (ASTTTTPTTSNTNTSTTTSTTSTSTTTTESTNTNNSANN) shows a compositional bias: low complexity. The disordered stretch occupies residues 390-460 (ASTTTTPTTS…SIDTNKKLKN (71 aa)). The span at 442-451 (DSNETNETDS) shows a compositional bias: acidic residues.

It belongs to the class I-like SAM-binding methyltransferase superfamily. TRM5/TYW2 family. Monomer.

The protein resides in the mitochondrion matrix. It is found in the nucleus. It localises to the cytoplasm. The catalysed reaction is guanosine(37) in tRNA + S-adenosyl-L-methionine = N(1)-methylguanosine(37) in tRNA + S-adenosyl-L-homocysteine + H(+). Its function is as follows. Specifically methylates the N1 position of guanosine-37 in various cytoplasmic and mitochondrial tRNAs. Methylation is not dependent on the nature of the nucleoside 5' of the target nucleoside. This is the first step in the biosynthesis of wybutosine (yW), a modified base adjacent to the anticodon of tRNAs and required for accurate decoding. The polypeptide is tRNA (guanine(37)-N(1))-methyltransferase (trmt5) (Dictyostelium discoideum (Social amoeba)).